The following is a 688-amino-acid chain: MKTRQNKYSIRKFSVGASSILIAALLFMGGGSAQAAEQQQDKGTVENSTTQSIGDGNEKLSEQQSTQNKNVNEKSNVNSITENESLHNETPKNEDLIQQQKDSQNDNKSESVVEQNKENGAFVQNHSEEKPQQEQVELEKHASENNQTLHSKAAQSNEDVKTKPSQLDNTAAKQEDSQKENLSKQDTQSSKTTDLLRATAQNQSKDSQSTEEINKEVNNDTQQVTAKNDDAKVESFNLNSKEEPLKVDKQANPTTDKDKSSKNDKGSQDGLANLESNAVATTNKQSKQQVSEKNEDQTNKSAKQKQYKNNDPIILVHGFNGFTDDINPSVLTHYWGGDKMNIRQDLEENGYEAYEASISAFGSNYDRAVELYYYIKGGRVDYGAAHAAKYGHERYGKTYEGVYKDWKPGQKIHLVGHSMGGQTIRQLEELLRHGNPEEVEYQKQHGGEISPLYQGGHDNMVSSITTLGTPHNGTHASDLLGNEAIVRQLAYDVGKMYGNKDSRVDFGLEHWGLKQKPNESYIQYVKRVQNSKLWKSKDSGLHDLTRDGATDLNRKTSLNPNIVYKTYTGESTHKTLAGKQKADLNMFLPFTITGNLIGKAKEKEWRENDGLVSVISSQHPFNQKYVEATDKNQKGVWQVTPTKHDWDHVDFVGQDSTDTKRTRDELQQFWHGLAEDLVQSEQLTSTNK.

The first 35 residues, 1–35 (MKTRQNKYSIRKFSVGASSILIAALLFMGGGSAQA), serve as a signal peptide directing secretion. The segment at 31-309 (GSAQAAEQQQ…KSAKQKQYKN (279 aa)) is disordered. Positions 36-302 (AEQQQDKGTV…KNEDQTNKSA (267 aa)) are cleaved as a propeptide — removed in mature form. A compositionally biased stretch (polar residues) spans 45–54 (VENSTTQSIG). Residues 68–79 (NKNVNEKSNVNS) show a composition bias toward low complexity. Basic and acidic residues-rich tracts occupy residues 84-95 (ESLHNETPKNED), 103-117 (SQNDNKSESVVEQNK), and 126-143 (HSEEKPQQEQVELEKHAS). Polar residues predominate over residues 144–172 (ENNQTLHSKAAQSNEDVKTKPSQLDNTAA). The span at 173-183 (KQEDSQKENLS) shows a compositional bias: basic and acidic residues. The span at 184-211 (KQDTQSSKTTDLLRATAQNQSKDSQSTE) shows a compositional bias: polar residues. Positions 240 to 267 (SKEEPLKVDKQANPTTDKDKSSKNDKGS) are enriched in basic and acidic residues. Residues 274–289 (LESNAVATTNKQSKQQ) are compositionally biased toward polar residues. Catalysis depends on S418, which acts as the Nucleophile. D609 functions as the Charge relay system in the catalytic mechanism. D647 lines the Ca(2+) pocket. H648 (charge relay system) is an active-site residue. Ca(2+) contacts are provided by D650, D655, and D658.

It belongs to the AB hydrolase superfamily. Lipase family.

It is found in the secreted. It carries out the reaction a triacylglycerol + H2O = a diacylglycerol + a fatty acid + H(+). This is Lipase (lip) from Staphylococcus epidermidis.